Consider the following 813-residue polypeptide: Ribonuclease R (813 aa).

The 328-residue stretch at 260–587 (RVDLRDLPLV…LHRAIKYLLA (328 aa)) folds into the RNB domain. N6-acetyllysine is present on K544. The S1 motif domain occupies 644 to 725 (GNVFKGVISS…DERKIDFSLI (82 aa)). A disordered region spans residues 733 to 813 (NVGKTAREKA…KRAAKKKVAE (81 aa)). Composition is skewed to basic and acidic residues over residues 737–749 (TAREKAKKGDAGK) and 761–774 (VNFEPDSAFRGEKK). A compositionally biased stretch (basic residues) spans 775–791 (TKPKAAKKDARKAKKPS). Residues 792–801 (AKTQKIAAAT) show a composition bias toward low complexity. Over residues 802–813 (KAKRAAKKKVAE) the composition is skewed to basic residues.

The protein belongs to the RNR ribonuclease family. RNase R subfamily. As to quaternary structure, monomer.

It localises to the cytoplasm. The enzyme catalyses Exonucleolytic cleavage in the 3'- to 5'-direction to yield nucleoside 5'-phosphates.. In terms of biological role, 3'-5' exoribonuclease that releases 5'-nucleoside monophosphates and is involved in maturation of structured RNAs. Required for the expression of virulence genes on the large plasmid of S.flexneri at the post-transcriptional level. The sequence is that of Ribonuclease R from Shigella flexneri.